A 591-amino-acid polypeptide reads, in one-letter code: Lipoprotein LpqB (591 aa).

The first 20 residues, 1 to 20, serve as a signal peptide directing secretion; sequence MTLRPSRRAVLSAAAVLLTG. A lipid anchor (N-palmitoyl cysteine) is attached at cysteine 21. Cysteine 21 is lipidated: S-diacylglycerol cysteine.

Belongs to the LpqB lipoprotein family.

It is found in the cell membrane. In Cutibacterium acnes (strain DSM 16379 / KPA171202) (Propionibacterium acnes), this protein is Lipoprotein LpqB.